The following is a 901-amino-acid chain: HTH-type transcriptional regulator MalT (901 aa).

An ATP-binding site is contributed by 39-46; the sequence is SPAGYGKT. Residues 829-894 enclose the HTH luxR-type domain; sequence ELIRTSPLTQ…DAVQHAQQLL (66 aa). Positions 853–872 form a DNA-binding region, H-T-H motif; it reads NEQIAGELAVAATTIKTHIR.

Belongs to the MalT family. In terms of assembly, monomer in solution. Oligomerizes to an active state in the presence of the positive effectors ATP and maltotriose.

Its activity is regulated as follows. Activated by ATP and maltotriose, which are both required for DNA binding. Its function is as follows. Positively regulates the transcription of the maltose regulon whose gene products are responsible for uptake and catabolism of malto-oligosaccharides. Specifically binds to the promoter region of its target genes, recognizing a short DNA motif called the MalT box. This chain is HTH-type transcriptional regulator MalT, found in Enterobacter sp. (strain 638).